Here is a 502-residue protein sequence, read N- to C-terminus: Nucleoside transporter 2 (502 aa).

Over 1–30 the chain is Cytoplasmic; the sequence is MTTSSDSAMVNHTPSPWYKFGFKSFAEFNT. The chain crosses the membrane as a helical span at residues 31-51; sequence YVTFVFLGMSIMMVASAVTSA. The Extracellular portion of the chain corresponds to 52 to 81; sequence PDFLTRYYVYATGDPDAVAETPLFWNNANT. A helical membrane pass occupies residues 82-102; sequence FYNAGTYVLQVLTELFSLTPF. Residues 103-111 are Cytoplasmic-facing; sequence MRRIPLSVR. A helical membrane pass occupies residues 112-132; sequence LFVGLGIPFAELLLIIIVPAA. The Extracellular portion of the chain corresponds to 133-137; it reads TIKSQ. Residues 138-158 traverse the membrane as a helical segment; that stretch reads HGAIAVIMVVACVGGFSKALC. Topologically, residues 159-178 are cytoplasmic; that stretch reads DSCTNALVGPFPTKFMNGAQ. The helical transmembrane segment at 179–199 threads the bilayer; sequence WGLTVIALLMSIIQIILKVSM. Residues 200–210 lie on the Extracellular side of the membrane; the sequence is GTSFHDILTMS. Residues 211–231 form a helical membrane-spanning segment; the sequence is RIYFGICIGIQLFAIFELAIL. At 232–352 the chain is on the cytoplasmic side; the sequence is RFNPFAQKYI…SVFKRVYPML (121 aa). Residues 252 to 273 are disordered; the sequence is AQNNESTLEETAPSMNEPAAGD. The helical transmembrane segment at 353–373 threads the bilayer; the sequence is VCVFLIYFTSLLTFPGVFFLV. At 374 to 380 the chain is on the extracellular side; it reads STTSGWY. The helical transmembrane segment at 381–401 threads the bilayer; that stretch reads MTVIVTLFNAGDFISRMVLMF. Topologically, residues 402–408 are cytoplasmic; the sequence is RPLRPSP. Residues 409–429 traverse the membrane as a helical segment; that stretch reads KVVVAGTLGRLIIIPFLVLCV. The Extracellular portion of the chain corresponds to 430-436; sequence RGIIRGE. Residues 437–457 traverse the membrane as a helical segment; the sequence is ALPYVLITLLGLTNGYFGCMA. Residues 458–477 are Cytoplasmic-facing; sequence CIHCPRTTTLRYAGERSLAA. A helical transmembrane segment spans residues 478-498; sequence MLSGISIMLGLCFGSNLSLAI. The Extracellular segment spans residues 499–502; that stretch reads TLTH.

Belongs to the SLC29A/ENT transporter (TC 2.A.57) family.

Its subcellular location is the cell membrane. It catalyses the reaction inosine(in) = inosine(out). The enzyme catalyses guanosine(in) = guanosine(out). High affinity transporter for inosine and guanosine. This chain is Nucleoside transporter 2, found in Crithidia fasciculata.